We begin with the raw amino-acid sequence, 88 residues long: Probable oxaloacetate decarboxylase gamma chain (88 aa).

A helical transmembrane segment spans residues 13-35 (LMFSGMGFVIIFLLILIWAIGIV).

Belongs to the OadG family. Heterotrimer of an alpha, a beta and a gamma subunit. It depends on Na(+) as a cofactor.

It localises to the cell membrane. It catalyses the reaction oxaloacetate + 2 Na(+)(in) + H(+) = pyruvate + 2 Na(+)(out) + CO2. In terms of biological role, catalyzes the decarboxylation of oxaloacetate coupled to Na(+) translocation. The protein is Probable oxaloacetate decarboxylase gamma chain of Mannheimia succiniciproducens (strain KCTC 0769BP / MBEL55E).